The following is a 382-amino-acid chain: Small ribosomal subunit protein bS1 homolog (382 aa).

S1 motif domains follow at residues 16-84, 102-167, 188-256, and 273-342; these read GDVV…LSKR, KEVF…LSHR, GSVL…LSIK, and GDVL…LSMR. Ser-243 bears the Phosphoserine mark.

It belongs to the bacterial ribosomal protein bS1 family.

Its function is as follows. Plays a role in sporulation. Cannot be expressed in wild-type E.coli, does not complement an E.coli rpsA deletion. The polypeptide is Small ribosomal subunit protein bS1 homolog (Bacillus subtilis (strain 168)).